The primary structure comprises 191 residues: Transmembrane protein 17B (191 aa).

4 helical membrane-spanning segments follow: residues 50–70 (MSLY…VVML), 83–103 (FILI…LYLG), 115–135 (LAGF…FQLF), and 147–167 (GVHI…FVAL).

It belongs to the TMEM17 family. In terms of assembly, part of the tectonic-like complex (also named B9 complex).

The protein localises to the cell projection. Its subcellular location is the cilium membrane. Functionally, transmembrane component of the tectonic-like complex, a complex localized at the transition zone of primary cilia and acting as a barrier that prevents diffusion of transmembrane proteins between the cilia and plasma membranes. Required for ciliogenesis and sonic hedgehog/SHH signaling. The protein is Transmembrane protein 17B (Tmem17b) of Danio rerio (Zebrafish).